The primary structure comprises 100 residues: MARKGLIEREKKRKKLEQKYHSIRGSSKKEIRKVPSLSDKWEIHGKLQSPPRNSAPVRLHRRCFLTGRPRANYRDFGLSGHVLREMVQACLLPGATRSSW.

A compositionally biased stretch (basic and acidic residues) spans 1-10 (MARKGLIERE). The segment at 1 to 29 (MARKGLIEREKKRKKLEQKYHSIRGSSKK) is disordered.

This sequence belongs to the universal ribosomal protein uS14 family. As to quaternary structure, part of the 30S ribosomal subunit.

It localises to the plastid. The protein resides in the chloroplast. Functionally, binds 16S rRNA, required for the assembly of 30S particles. The sequence is that of Small ribosomal subunit protein uS14c from Acorus calamus (Sweet flag).